Here is an 809-residue protein sequence, read N- to C-terminus: Phenylalanine--tRNA ligase beta subunit (809 aa).

Residues lysine 39–serine 152 enclose the tRNA-binding domain. The 89-residue stretch at lysine 404–cysteine 492 folds into the B5 domain. Mg(2+)-binding residues include aspartate 470, aspartate 476, glutamate 479, and glutamate 480. One can recognise an FDX-ACB domain in the interval asparagine 717 to arginine 808.

Belongs to the phenylalanyl-tRNA synthetase beta subunit family. Type 1 subfamily. Tetramer of two alpha and two beta subunits. Mg(2+) serves as cofactor.

Its subcellular location is the cytoplasm. The enzyme catalyses tRNA(Phe) + L-phenylalanine + ATP = L-phenylalanyl-tRNA(Phe) + AMP + diphosphate + H(+). The sequence is that of Phenylalanine--tRNA ligase beta subunit from Dehalococcoides mccartyi (strain ATCC BAA-2266 / KCTC 15142 / 195) (Dehalococcoides ethenogenes (strain 195)).